A 413-amino-acid chain; its full sequence is MAKYEKLIPRFLEYITTETRSDENATTIPSTQTQVVFLHKLMDDLKEIGLSDVKYNEKNGYVTALLPSNIDKKVPTMGFLSHVDTADFNAKGVNPQTIENYDGESIIKLDEAGQFVLDPKEFPNMKNYKGQTLITTDGSTLLGSDDKSGVAEIITAMDYFIQHPEIKHGDIKIGLGPDEEIGTGADHFDAEDFATDFAYTMDGGPIGQLEYETFNAAAMKVDIQGKNVHPSEAKDIMINALQVAVDFQDAFPRDEVPEKTDGRQGFYHLLSLDGTVDEAHMAYIIRDFDRDGLETRKAFAAKVAEDMNAKYGEGRVKATIKDQYYNMAEVLKDHMDVVDLAKDAMEAIDIKPLIEPVRGGTDGSKISFMGIPTPNIFAGAENMHGRYEFVSVQTMEKAVDTMIKMNELNVERN.

Residue His-82 coordinates Zn(2+). The active site involves Asp-84. Asp-145 contacts Zn(2+). Glu-179 (proton acceptor) is an active-site residue. Zn(2+) is bound by residues Glu-180, Asp-202, and His-384.

This sequence belongs to the peptidase M20B family. Requires Zn(2+) as cofactor.

The protein resides in the cytoplasm. The enzyme catalyses Release of the N-terminal residue from a tripeptide.. Functionally, cleaves the N-terminal amino acid of tripeptides. The polypeptide is Peptidase T (Latilactobacillus sakei subsp. sakei (strain 23K) (Lactobacillus sakei subsp. sakei)).